Here is a 786-residue protein sequence, read N- to C-terminus: Endonuclease MutS2 (786 aa).

332–339 (GPNTGGKT) is an ATP binding site. The region spanning 710–785 (VDLRGLDAEE…GDGVTMVELK (76 aa)) is the Smr domain.

The protein belongs to the DNA mismatch repair MutS family. MutS2 subfamily. Homodimer. Binds to stalled ribosomes, contacting rRNA.

Its function is as follows. Endonuclease that is involved in the suppression of homologous recombination and thus may have a key role in the control of bacterial genetic diversity. Acts as a ribosome collision sensor, splitting the ribosome into its 2 subunits. Detects stalled/collided 70S ribosomes which it binds and splits by an ATP-hydrolysis driven conformational change. Acts upstream of the ribosome quality control system (RQC), a ribosome-associated complex that mediates the extraction of incompletely synthesized nascent chains from stalled ribosomes and their subsequent degradation. Probably generates substrates for RQC. The polypeptide is Endonuclease MutS2 (Clostridium beijerinckii (strain ATCC 51743 / NCIMB 8052) (Clostridium acetobutylicum)).